The following is a 198-amino-acid chain: Protein FAM219B (198 aa).

Disordered stretches follow at residues 1-58 (MATA…KRGP) and 83-146 (RRKG…EQVN). 4 positions are modified to phosphoserine: S14, S91, S125, and S127. Positions 134 to 146 (RYSSGYSSAEQVN) are enriched in polar residues.

This sequence belongs to the FAM219 family.

In Homo sapiens (Human), this protein is Protein FAM219B (FAM219B).